We begin with the raw amino-acid sequence, 549 residues long: Glucose-6-phosphate isomerase (549 aa).

K80, K228, and K234 each carry N6-acetyllysine. E355 acts as the Proton donor in catalysis. Residues H386 and K514 contribute to the active site.

This sequence belongs to the GPI family.

It is found in the cytoplasm. The enzyme catalyses alpha-D-glucose 6-phosphate = beta-D-fructose 6-phosphate. The protein operates within carbohydrate biosynthesis; gluconeogenesis. It functions in the pathway carbohydrate degradation; glycolysis; D-glyceraldehyde 3-phosphate and glycerone phosphate from D-glucose: step 2/4. Catalyzes the reversible isomerization of glucose-6-phosphate to fructose-6-phosphate. This is Glucose-6-phosphate isomerase from Shigella flexneri serotype 5b (strain 8401).